The following is an 841-amino-acid chain: Translation initiation factor IF-2 (841 aa).

Residues 94–258 (QRSPEEIEAE…HGFQSPTGPV (165 aa)) are disordered. Basic and acidic residues predominate over residues 96–136 (SPEEIEAERKRELEERRAVENAARQKAEEEAKRRAEEEARR). Positions 137 to 173 (QPAAAQPAGTEAVAAPVAPVEAVREAAPVAAAPAPAA) are enriched in low complexity. Basic and acidic residues-rich tracts occupy residues 174–194 (DARKRDEPRRPDKPRADDNNR), 200–217 (DGERKNAPHRASVKEKAP), and 225–234 (TTDEESDGFR). Over residues 235–248 (RGGRGKAKLKKRNA) the composition is skewed to basic residues. The region spanning 341–510 (SRAPVVTVMG…LLQAEVLELK (170 aa)) is the tr-type G domain. Residues 350–357 (GHVDHGKT) form a G1 region. Residue 350 to 357 (GHVDHGKT) participates in GTP binding. A G2 region spans residues 375–379 (GITQH). Residues 396–399 (DTPG) form a G3 region. Residues 396-400 (DTPGH) and 450-453 (NKID) each bind GTP. The tract at residues 450–453 (NKID) is G4. The interval 486–488 (SAK) is G5.

It belongs to the TRAFAC class translation factor GTPase superfamily. Classic translation factor GTPase family. IF-2 subfamily.

The protein localises to the cytoplasm. Functionally, one of the essential components for the initiation of protein synthesis. Protects formylmethionyl-tRNA from spontaneous hydrolysis and promotes its binding to the 30S ribosomal subunits. Also involved in the hydrolysis of GTP during the formation of the 70S ribosomal complex. This chain is Translation initiation factor IF-2, found in Pseudomonas fluorescens (strain SBW25).